Here is a 198-residue protein sequence, read N- to C-terminus: Golgi to ER traffic protein 1 (198 aa).

Topologically, residues 1-6 are lumenal; sequence MDPFSI. Residues 7 to 26 traverse the membrane as a helical segment; it reads LLTLTLIILAQNAVRIVGKS. At 27–110 the chain is on the cytoplasmic side; sequence QIHQSIWNLY…AIEKYLGLAI (84 aa). A coiled-coil region spans residues 73-106; that stretch reads KWTKLNRKYDQLQTEIKAVSDQVSQQQQAIEKYL. A helical transmembrane segment spans residues 111–131; the sequence is SVTTTLPLWLFRFKYRKQPLF. Over 132–155 the chain is Lumenal; it reads YFPKDTFPSYLEWILSFPSVPQGS. The helical transmembrane segment at 156–172 threads the bilayer; it reads IGIMFWILLLNKFVSNL. At 173 to 198 the chain is on the cytoplasmic side; the sequence is EFIVKTFSTKVEKPVPIVKVEDLSPK.

The protein belongs to the WRB/GET1 family. As to quaternary structure, component of the Golgi to ER traffic (GET) complex, which is composed of GET1, GET2 and GET3. Within the complex, GET1 and GET2 form a heterotetramer which is stabilized by phosphatidylinositol binding and which binds to the GET3 homodimer.

Its subcellular location is the endoplasmic reticulum membrane. It is found in the golgi apparatus membrane. Required for the post-translational delivery of tail-anchored (TA) proteins to the endoplasmic reticulum. Together with GET2, acts as a membrane receptor for soluble GET3, which recognizes and selectively binds the transmembrane domain of TA proteins in the cytosol. The GET complex cooperates with the HDEL receptor ERD2 to mediate the ATP-dependent retrieval of resident ER proteins that contain a C-terminal H-D-E-L retention signal from the Golgi to the ER. The chain is Golgi to ER traffic protein 1 from Komagataella phaffii (strain GS115 / ATCC 20864) (Yeast).